Reading from the N-terminus, the 435-residue chain is Monodehydroascorbate reductase 2 (435 aa).

FAD is bound by residues 14 to 17 (GGVA), Glu41, Arg48, Lys53, Ile96, and 147 to 148 (RE). NAD(+)-binding positions include 172–178 (GGYIGLE), Glu196, Arg202, and Gly261. NADP(+) is bound at residue 174–178 (YIGLE). NADP(+) is bound by residues Arg202 and Gly261. Asp298 contacts FAD. An NAD(+)-binding site is contributed by 314–315 (EH). 314 to 315 (EH) contacts NADP(+). Residue Val316 coordinates FAD. Arg320 provides a ligand contact to L-ascorbate. Tyr349 contacts FAD. NAD(+) is bound at residue Tyr349. NADP(+) is bound at residue Tyr349. L-ascorbate is bound at residue Arg351. Ser417 bears the Phosphoserine mark.

Belongs to the FAD-dependent oxidoreductase family. Requires FAD as cofactor.

It localises to the cytoplasm. It carries out the reaction 2 monodehydro-L-ascorbate radical + NADH + H(+) = 2 L-ascorbate + NAD(+). In terms of biological role, catalyzes the conversion of monodehydroascorbate to ascorbate, oxidizing NADH in the process. The chain is Monodehydroascorbate reductase 2 from Arabidopsis thaliana (Mouse-ear cress).